The primary structure comprises 161 residues: Crossover junction endodeoxyribonuclease RuvC (161 aa).

Residues aspartate 7, glutamate 67, and aspartate 139 contribute to the active site. Residues aspartate 7, glutamate 67, and aspartate 139 each contribute to the Mg(2+) site.

Belongs to the RuvC family. As to quaternary structure, homodimer which binds Holliday junction (HJ) DNA. The HJ becomes 2-fold symmetrical on binding to RuvC with unstacked arms; it has a different conformation from HJ DNA in complex with RuvA. In the full resolvosome a probable DNA-RuvA(4)-RuvB(12)-RuvC(2) complex forms which resolves the HJ. Mg(2+) serves as cofactor.

It localises to the cytoplasm. It catalyses the reaction Endonucleolytic cleavage at a junction such as a reciprocal single-stranded crossover between two homologous DNA duplexes (Holliday junction).. Its function is as follows. The RuvA-RuvB-RuvC complex processes Holliday junction (HJ) DNA during genetic recombination and DNA repair. Endonuclease that resolves HJ intermediates. Cleaves cruciform DNA by making single-stranded nicks across the HJ at symmetrical positions within the homologous arms, yielding a 5'-phosphate and a 3'-hydroxyl group; requires a central core of homology in the junction. The consensus cleavage sequence is 5'-(A/T)TT(C/G)-3'. Cleavage occurs on the 3'-side of the TT dinucleotide at the point of strand exchange. HJ branch migration catalyzed by RuvA-RuvB allows RuvC to scan DNA until it finds its consensus sequence, where it cleaves and resolves the cruciform DNA. The chain is Crossover junction endodeoxyribonuclease RuvC from Syntrophotalea carbinolica (strain DSM 2380 / NBRC 103641 / GraBd1) (Pelobacter carbinolicus).